The following is a 189-amino-acid chain: dCTP deaminase (189 aa).

DCTP is bound by residues 112 to 117 (KSTYAR), 136 to 138 (TLE), Gln-157, Tyr-171, and Gln-181. The Proton donor/acceptor role is filled by Glu-138.

This sequence belongs to the dCTP deaminase family. Homotrimer.

The enzyme catalyses dCTP + H2O + H(+) = dUTP + NH4(+). Its pathway is pyrimidine metabolism; dUMP biosynthesis; dUMP from dCTP (dUTP route): step 1/2. In terms of biological role, catalyzes the deamination of dCTP to dUTP. This Acinetobacter baumannii (strain SDF) protein is dCTP deaminase.